The following is a 354-amino-acid chain: UDP-glucose 4-epimerase 1 (354 aa).

Residue 8-39 (TILVTGGAGYIGSHTVLQLLQLGFRVVVLDNL) coordinates NAD(+). S133 is a substrate binding site. Y157 serves as the catalytic Proton acceptor.

It belongs to the NAD(P)-dependent epimerase/dehydratase family. NAD(+) is required as a cofactor.

It catalyses the reaction UDP-alpha-D-glucose = UDP-alpha-D-galactose. It functions in the pathway carbohydrate metabolism; galactose metabolism. Functionally, catalyzes the interconversion between UDP-glucose and UDP-galactose. The sequence is that of UDP-glucose 4-epimerase 1 (UGE-1) from Oryza sativa subsp. japonica (Rice).